The primary structure comprises 273 residues: Gap junction beta-5 protein (273 aa).

Residues 1-20 (MNWSIFEGLLSGVNKYSTAF) are Cytoplasmic-facing. Residues 21–40 (GRIWLSLVFIFRVLVYLVTA) form a helical membrane-spanning segment. The Extracellular portion of the chain corresponds to 41 to 75 (ERVWSDDHKDFDCNTRQPGCSNVCFDEFFPVSHVR). A helical membrane pass occupies residues 76–98 (LWALQLILVTCPSLLVVMHVAYR). At 99-126 (EVQEKRHREAHGENSGRLYLNPGKKRGG) the chain is on the cytoplasmic side. Residues 127 to 149 (LWWTYVCSLVFKASVDIAFLYVF) traverse the membrane as a helical segment. Over 150 to 187 (HSFYPKYILPPVVKCHADPCPNIVDCFISKPSEKNIFT) the chain is Extracellular. A helical transmembrane segment spans residues 188-210 (LFMVATAAICILLNLVELIYLVS). The Cytoplasmic portion of the chain corresponds to 211–273 (KRCHECLAAR…PRDHVKKTIL (63 aa)).

Belongs to the connexin family. Beta-type (group I) subfamily. In terms of assembly, a connexon is composed of a hexamer of connexins.

It localises to the cell membrane. It is found in the cell junction. The protein resides in the gap junction. One gap junction consists of a cluster of closely packed pairs of transmembrane channels, the connexons, through which materials of low MW diffuse from one cell to a neighboring cell. The polypeptide is Gap junction beta-5 protein (GJB5) (Homo sapiens (Human)).